The sequence spans 172 residues: Ribosome maturation factor RimP (172 aa).

It belongs to the RimP family.

Its subcellular location is the cytoplasm. In terms of biological role, required for maturation of 30S ribosomal subunits. The protein is Ribosome maturation factor RimP of Chlorobium phaeovibrioides (strain DSM 265 / 1930) (Prosthecochloris vibrioformis (strain DSM 265)).